A 304-amino-acid chain; its full sequence is Probable 5-dehydro-4-deoxyglucarate dehydratase (304 aa).

The protein belongs to the DapA family.

The enzyme catalyses 5-dehydro-4-deoxy-D-glucarate + H(+) = 2,5-dioxopentanoate + CO2 + H2O. The protein operates within carbohydrate acid metabolism; D-glucarate degradation; 2,5-dioxopentanoate from D-glucarate: step 2/2. This is Probable 5-dehydro-4-deoxyglucarate dehydratase from Arthrobacter sp. (strain FB24).